The primary structure comprises 123 residues: Unknown 12C protein (123 aa).

An N-terminal signal peptide occupies residues 1-17 (MMSALFLVLSVSLLVSG).

Post-translationally, contains 6 disulfide bonds. Expressed in acontia, a specialised envenomation structure laden with batteries of venom-containing nematocysts found only in the superfamily Metridioidea.

It is found in the secreted. The protein resides in the nematocyst. Its function is as follows. Cysteine-rich protein with probable toxin activity. This chain is Unknown 12C protein, found in Calliactis polypus (Hermit crab anemone).